Here is a 139-residue protein sequence, read N- to C-terminus: Putative pre-16S rRNA nuclease (139 aa).

The protein belongs to the YqgF nuclease family.

Its subcellular location is the cytoplasm. Its function is as follows. Could be a nuclease involved in processing of the 5'-end of pre-16S rRNA. In Streptococcus equi subsp. equi (strain 4047), this protein is Putative pre-16S rRNA nuclease.